A 381-amino-acid chain; its full sequence is L-lactate dehydrogenase (381 aa).

Positions 1–380 (MIISASTDYR…SADSLVRELG (380 aa)) constitute an FMN hydroxy acid dehydrogenase domain. Residue tyrosine 24 coordinates substrate. Serine 106 and glutamine 127 together coordinate FMN. Residue tyrosine 129 participates in substrate binding. Threonine 155 provides a ligand contact to FMN. Substrate is bound at residue arginine 164. Residue lysine 251 participates in FMN binding. Histidine 275 serves as the catalytic Proton acceptor. Arginine 278 is a substrate binding site. 306–330 (DSGIRTGLDVVRMIALGADSVLLGR) contacts FMN.

Belongs to the FMN-dependent alpha-hydroxy acid dehydrogenase family. As to quaternary structure, homotetramer. Requires FMN as cofactor.

The protein localises to the cell inner membrane. The catalysed reaction is (S)-lactate + A = pyruvate + AH2. Its function is as follows. Catalyzes the conversion of L-lactate to pyruvate. Is coupled to the respiratory chain. The sequence is that of L-lactate dehydrogenase from Pseudomonas aeruginosa (strain LESB58).